The following is a 384-amino-acid chain: Organic solute transporter alpha-like protein 1 (384 aa).

Over 1–38 (MEIVKTIIPHNRSYIEPPIPSATEWLANMSVMHVSCLT) the chain is Extracellular. N-linked (GlcNAc...) asparagine glycans are attached at residues Asn-11 and Asn-28. Residues 39–59 (IACVFVAITFLSSFFHLFFVL) form a helical membrane-spanning segment. Over 60–70 (KYVSNERIRND) the chain is Cytoplasmic. A helical membrane pass occupies residues 71–91 (MYALIFMFPITTFASLVGMFI). The Extracellular segment spans residues 92-93 (PR). Residues 94-114 (AAIFLYAVSLVYFMFTLFIMV) form a helical membrane-spanning segment. The Cytoplasmic segment spans residues 115-165 (TLLFNIFGGRQEMSAYLLQRNIRVNFTVPPLCFFKFLPTVESTDQNLRRIE). The helical transmembrane segment at 166-186 (WLVFQTPIIRTLLELVSVVVS) threads the bilayer. At 187-202 (MEQEGRRESVWFVFSQ) the chain is on the extracellular side. The helical transmembrane segment at 203–223 (LMALLSMCIAFYGCYVMVPLG) threads the bilayer. At 224 to 240 (REKHAPYRFDFLFRTCD) the chain is on the cytoplasmic side. Residues 241 to 261 (IAQCIYTIQKFVFEFAAAVGL) form a helical membrane-spanning segment. At 262-273 (ITSDRYLPAAAK) the chain is on the extracellular side. Residues 274-294 (ALWWASFMCTWEMMLLSALCS) form a helical membrane-spanning segment. Residues 295–384 (YCLRPAKCKF…FDSLSQIQGQ (90 aa)) are Cytoplasmic-facing.

The protein belongs to the OST-alpha family.

The protein resides in the cell membrane. In terms of biological role, probable transporter. This Caenorhabditis elegans protein is Organic solute transporter alpha-like protein 1 (osta-1).